A 236-amino-acid polypeptide reads, in one-letter code: Large ribosomal subunit protein uL1 (236 aa).

The protein belongs to the universal ribosomal protein uL1 family. Part of the 50S ribosomal subunit.

Binds directly to 23S rRNA. The L1 stalk is quite mobile in the ribosome, and is involved in E site tRNA release. Functionally, protein L1 is also a translational repressor protein, it controls the translation of the L11 operon by binding to its mRNA. The polypeptide is Large ribosomal subunit protein uL1 (Heliobacterium modesticaldum (strain ATCC 51547 / Ice1)).